The sequence spans 397 residues: Protochlorophyllide reductase, chloroplastic (397 aa).

The transit peptide at 1-57 (MALTMSAKSVSARAQVSSKAQAAPAVAVSGRTSSRVMPAPALAARSSVARTPLVVCA) directs the protein to the chloroplast.

The protein belongs to the short-chain dehydrogenases/reductases (SDR) family. POR subfamily.

The protein resides in the plastid. It is found in the chloroplast. It catalyses the reaction chlorophyllide a + NADP(+) = protochlorophyllide a + NADPH + H(+). The protein operates within porphyrin-containing compound metabolism; chlorophyll biosynthesis. In terms of biological role, phototransformation of protochlorophyllide (Pchlide) to chlorophyllide (Chlide). This chain is Protochlorophyllide reductase, chloroplastic (PORA), found in Chlamydomonas reinhardtii (Chlamydomonas smithii).